A 1025-amino-acid polypeptide reads, in one-letter code: Multidrug resistance protein MdtC (1025 aa).

12 helical membrane-spanning segments follow: residues 3-23 (FFAL…AITL), 333-353 (EVEQ…FLFL), 360-380 (IIPA…MYLC), 387-407 (LSLM…IVVL), 431-451 (VGFT…PLLL), 463-483 (FAVT…TLTP), 528-548 (LVGV…ISIP), 853-873 (VILI…LYES), 875-895 (VHPL…LLAL), 897-917 (LFNA…IGIV), 953-973 (PIMM…LSGG), and 984-1004 (ITIV…TPVV).

The protein belongs to the resistance-nodulation-cell division (RND) (TC 2.A.6) family. MdtC subfamily. As to quaternary structure, part of a tripartite efflux system composed of MdtA, MdtB and MdtC. MdtC forms a heteromultimer with MdtB.

Its subcellular location is the cell inner membrane. The MdtABC tripartite complex confers resistance against novobiocin and deoxycholate. The chain is Multidrug resistance protein MdtC from Escherichia coli O7:K1 (strain IAI39 / ExPEC).